Here is a 367-residue protein sequence, read N- to C-terminus: Alanine racemase (367 aa).

The Proton acceptor; specific for D-alanine role is filled by Lys-40. Position 40 is an N6-(pyridoxal phosphate)lysine (Lys-40). Arg-136 is a substrate binding site. Catalysis depends on Tyr-263, which acts as the Proton acceptor; specific for L-alanine. Met-310 lines the substrate pocket.

It belongs to the alanine racemase family. The cofactor is pyridoxal 5'-phosphate.

The catalysed reaction is L-alanine = D-alanine. The protein operates within amino-acid biosynthesis; D-alanine biosynthesis; D-alanine from L-alanine: step 1/1. Its function is as follows. Catalyzes the interconversion of L-alanine and D-alanine. May also act on other amino acids. This chain is Alanine racemase (alr), found in Streptococcus pneumoniae (strain Hungary19A-6).